The sequence spans 188 residues: Cell division protein ZapC (188 aa).

This sequence belongs to the ZapC family. In terms of assembly, interacts directly with FtsZ.

It is found in the cytoplasm. In terms of biological role, contributes to the efficiency of the cell division process by stabilizing the polymeric form of the cell division protein FtsZ. Acts by promoting interactions between FtsZ protofilaments and suppressing the GTPase activity of FtsZ. The chain is Cell division protein ZapC from Psychromonas ingrahamii (strain DSM 17664 / CCUG 51855 / 37).